The sequence spans 208 residues: Ribosomal RNA small subunit methyltransferase G (208 aa).

Residues Gly76, Leu81, 127–128 (VE), and Arg142 contribute to the S-adenosyl-L-methionine site.

The protein belongs to the methyltransferase superfamily. RNA methyltransferase RsmG family.

It localises to the cytoplasm. The enzyme catalyses guanosine(527) in 16S rRNA + S-adenosyl-L-methionine = N(7)-methylguanosine(527) in 16S rRNA + S-adenosyl-L-homocysteine. Functionally, specifically methylates the N7 position of guanine in position 527 of 16S rRNA. The protein is Ribosomal RNA small subunit methyltransferase G of Legionella pneumophila (strain Corby).